A 92-amino-acid chain; its full sequence is Co-chaperonin GroES (92 aa).

This sequence belongs to the GroES chaperonin family. As to quaternary structure, heptamer of 7 subunits arranged in a ring. Interacts with the chaperonin GroEL.

It is found in the cytoplasm. Functionally, together with the chaperonin GroEL, plays an essential role in assisting protein folding. The GroEL-GroES system forms a nano-cage that allows encapsulation of the non-native substrate proteins and provides a physical environment optimized to promote and accelerate protein folding. GroES binds to the apical surface of the GroEL ring, thereby capping the opening of the GroEL channel. This Methanosarcina barkeri (strain Fusaro / DSM 804) protein is Co-chaperonin GroES.